The sequence spans 133 residues: Small ribosomal subunit protein uS8 (133 aa).

This sequence belongs to the universal ribosomal protein uS8 family. Part of the 30S ribosomal subunit. Contacts proteins S5 and S12.

Its function is as follows. One of the primary rRNA binding proteins, it binds directly to 16S rRNA central domain where it helps coordinate assembly of the platform of the 30S subunit. This chain is Small ribosomal subunit protein uS8, found in Prochlorococcus marinus (strain MIT 9215).